The following is a 155-amino-acid chain: Gas vesicle protein K (155 aa).

This sequence belongs to the gas vesicle GvpK family.

It is found in the gas vesicle. Functionally, might be involved in nucleating gas vesicle formation. Gas vesicles (GV) are hollow, gas filled proteinaceous nanostructures. During planktonic growth they allow positioning of the organism at a favorable depth for light or nutrient acquisition. In Dolichospermum flosaquae (Anabaena flos-aquae), this protein is Gas vesicle protein K.